A 217-amino-acid chain; its full sequence is Adapter protein MecA (217 aa).

This sequence belongs to the MecA family. In terms of assembly, homodimer.

Enables the recognition and targeting of unfolded and aggregated proteins to the ClpC protease or to other proteins involved in proteolysis. The chain is Adapter protein MecA from Listeria innocua serovar 6a (strain ATCC BAA-680 / CLIP 11262).